The sequence spans 233 residues: Orotidine 5'-phosphate decarboxylase (233 aa).

Substrate contacts are provided by residues Asp13, Lys35, 62 to 71 (DLKFHDIPNT), Thr122, Arg182, Gln191, Gly211, and Arg212. Lys64 (proton donor) is an active-site residue.

This sequence belongs to the OMP decarboxylase family. Type 1 subfamily. Homodimer.

It catalyses the reaction orotidine 5'-phosphate + H(+) = UMP + CO2. The protein operates within pyrimidine metabolism; UMP biosynthesis via de novo pathway; UMP from orotate: step 2/2. Functionally, catalyzes the decarboxylation of orotidine 5'-monophosphate (OMP) to uridine 5'-monophosphate (UMP). The protein is Orotidine 5'-phosphate decarboxylase of Pseudomonas putida (strain ATCC 700007 / DSM 6899 / JCM 31910 / BCRC 17059 / LMG 24140 / F1).